A 197-amino-acid polypeptide reads, in one-letter code: dITP/XTP pyrophosphatase (197 aa).

10–15 (SHNGGK) contributes to the substrate binding site. Mg(2+) contacts are provided by Glu41 and Asp70. Catalysis depends on Asp70, which acts as the Proton acceptor. Substrate is bound by residues Ser71, 154-157 (FGYD), Lys177, and 182-183 (HR).

This sequence belongs to the HAM1 NTPase family. Homodimer. Mg(2+) serves as cofactor.

The enzyme catalyses XTP + H2O = XMP + diphosphate + H(+). It catalyses the reaction dITP + H2O = dIMP + diphosphate + H(+). The catalysed reaction is ITP + H2O = IMP + diphosphate + H(+). In terms of biological role, pyrophosphatase that catalyzes the hydrolysis of nucleoside triphosphates to their monophosphate derivatives, with a high preference for the non-canonical purine nucleotides XTP (xanthosine triphosphate), dITP (deoxyinosine triphosphate) and ITP. Seems to function as a house-cleaning enzyme that removes non-canonical purine nucleotides from the nucleotide pool, thus preventing their incorporation into DNA/RNA and avoiding chromosomal lesions. The protein is dITP/XTP pyrophosphatase of Pseudomonas syringae pv. tomato (strain ATCC BAA-871 / DC3000).